A 331-amino-acid polypeptide reads, in one-letter code: Glucokinase (331 aa).

16 to 21 lines the ATP pocket; sequence GDIGGT.

Belongs to the bacterial glucokinase family.

It is found in the cytoplasm. The catalysed reaction is D-glucose + ATP = D-glucose 6-phosphate + ADP + H(+). In Pseudomonas aeruginosa (strain LESB58), this protein is Glucokinase.